Reading from the N-terminus, the 510-residue chain is Probable cytochrome P450 4d20 (510 aa).

Cys-455 lines the heme pocket.

This sequence belongs to the cytochrome P450 family. The cofactor is heme.

The protein localises to the endoplasmic reticulum membrane. It localises to the microsome membrane. Functionally, may be involved in the metabolism of insect hormones and in the breakdown of synthetic insecticides. The sequence is that of Probable cytochrome P450 4d20 (Cyp4d20) from Drosophila melanogaster (Fruit fly).